The primary structure comprises 277 residues: Urease accessory protein UreD (277 aa).

Belongs to the UreD family. In terms of assembly, ureD, UreF and UreG form a complex that acts as a GTP-hydrolysis-dependent molecular chaperone, activating the urease apoprotein by helping to assemble the nickel containing metallocenter of UreC. The UreE protein probably delivers the nickel.

It is found in the cytoplasm. In terms of biological role, required for maturation of urease via the functional incorporation of the urease nickel metallocenter. This is Urease accessory protein UreD from Pseudomonas entomophila (strain L48).